Reading from the N-terminus, the 111-residue chain is Large ribosomal subunit protein uL22 (111 aa).

This sequence belongs to the universal ribosomal protein uL22 family. Part of the 50S ribosomal subunit.

Its function is as follows. This protein binds specifically to 23S rRNA; its binding is stimulated by other ribosomal proteins, e.g. L4, L17, and L20. It is important during the early stages of 50S assembly. It makes multiple contacts with different domains of the 23S rRNA in the assembled 50S subunit and ribosome. Functionally, the globular domain of the protein is located near the polypeptide exit tunnel on the outside of the subunit, while an extended beta-hairpin is found that lines the wall of the exit tunnel in the center of the 70S ribosome. The polypeptide is Large ribosomal subunit protein uL22 (Chlamydia trachomatis serovar L2 (strain ATCC VR-902B / DSM 19102 / 434/Bu)).